We begin with the raw amino-acid sequence, 395 residues long: Sensor protein DltS (395 aa).

A run of 2 helical transmembrane segments spans residues 9–29 (FVFL…AVSN) and 136–156 (FLIL…SLYL). The 211-residue stretch at 177–387 (DASHELKTPI…RLEVQLPIDG (211 aa)) folds into the Histidine kinase domain. Histidine 180 is subject to Phosphohistidine; by autocatalysis.

It localises to the cell membrane. The enzyme catalyses ATP + protein L-histidine = ADP + protein N-phospho-L-histidine.. Functionally, member of the two-component regulatory system DltS/DltR. Regulates the expression of the dlt operon. Probably phosphorylates DltR. The protein is Sensor protein DltS (dltS) of Streptococcus agalactiae serotype V (strain ATCC BAA-611 / 2603 V/R).